We begin with the raw amino-acid sequence, 450 residues long: Interferon regulatory factor 4 (450 aa).

Positions 21 to 129 (NGKLRQWLID…DPYKVYRIVP (109 aa)) form a DNA-binding region, IRF tryptophan pentad repeat. Phosphoserine; by ROCK2 occurs at positions 446 and 447.

It belongs to the IRF family. Interacts with SPIB and DEF6. Interacts with the BATF-JUNB heterodimer. Interacts with BATF (via bZIP domain); the interaction is direct. Directly interacts with NLRP3 in the nucleus of Th2 cells; this interaction enhances IRF4 ability to bind to the IL4 promoter and is required for optimal IRF4-dependent IL4 transcription. Interacts with SPI1. Phosphorylation by ROCK2 regulates IL-17 and IL-21 production. As to expression, lymphoid cells.

The protein localises to the nucleus. Its subcellular location is the cytoplasm. Transcriptional activator. Binds to the interferon-stimulated response element (ISRE) of the MHC class I promoter. Binds the immunoglobulin lambda light chain enhancer, together with PU.1. Probably plays a role in ISRE-targeted signal transduction mechanisms specific to lymphoid cells. Involved in CD8(+) dendritic cell differentiation by forming a complex with the BATF-JUNB heterodimer in immune cells, leading to recognition of AICE sequence (5'-TGAnTCA/GAAA-3'), an immune-specific regulatory element, followed by cooperative binding of BATF and IRF4 and activation of genes. This is Interferon regulatory factor 4 from Mus musculus (Mouse).